A 124-amino-acid polypeptide reads, in one-letter code: UPF0102 protein Blon_1698/BLIJ_1758 (124 aa).

This sequence belongs to the UPF0102 family.

The chain is UPF0102 protein Blon_1698/BLIJ_1758 from Bifidobacterium longum subsp. infantis (strain ATCC 15697 / DSM 20088 / JCM 1222 / NCTC 11817 / S12).